The chain runs to 423 residues: Protein CLP1 homolog (423 aa).

Residues glutamate 16, lysine 57, and 119–124 (DVGKST) contribute to the ATP site.

It belongs to the Clp1 family. Clp1 subfamily.

Its subcellular location is the nucleus. Its function is as follows. Required for endonucleolytic cleavage during polyadenylation-dependent pre-mRNA 3'-end formation. In Drosophila sechellia (Fruit fly), this protein is Protein CLP1 homolog (cbc).